Consider the following 426-residue polypeptide: Glutamate-1-semialdehyde 2,1-aminomutase (426 aa).

At Lys-265 the chain carries N6-(pyridoxal phosphate)lysine.

It belongs to the class-III pyridoxal-phosphate-dependent aminotransferase family. HemL subfamily. In terms of assembly, homodimer. It depends on pyridoxal 5'-phosphate as a cofactor.

It is found in the cytoplasm. The enzyme catalyses (S)-4-amino-5-oxopentanoate = 5-aminolevulinate. The protein operates within porphyrin-containing compound metabolism; protoporphyrin-IX biosynthesis; 5-aminolevulinate from L-glutamyl-tRNA(Glu): step 2/2. This Salmonella newport (strain SL254) protein is Glutamate-1-semialdehyde 2,1-aminomutase.